The following is a 673-amino-acid chain: UvrABC system protein B (673 aa).

One can recognise a Helicase ATP-binding domain in the interval 26–183 (ANFEAGLAKQ…RHLTDLQYTR (158 aa)). 39–46 (GVTGSGKT) provides a ligand contact to ATP. Residues 92–115 (YYDYYQPEAYVPSSDTFIEKDSSI) carry the Beta-hairpin motif. Residues 431–597 (QVDDLMSEIH…SVERPISDIM (167 aa)) form the Helicase C-terminal domain. Positions 601-631 (REDAAEKKSGKGRSKSRQVAEETPDYRAMKP) are disordered. Positions 618-630 (QVAEETPDYRAMK) are enriched in basic and acidic residues. The UVR domain occupies 635–670 (AGKLKSLEQKMYQHAKDLEFEAAAQIRDQIQKLKTA).

This sequence belongs to the UvrB family. As to quaternary structure, forms a heterotetramer with UvrA during the search for lesions. Interacts with UvrC in an incision complex.

It is found in the cytoplasm. The UvrABC repair system catalyzes the recognition and processing of DNA lesions. A damage recognition complex composed of 2 UvrA and 2 UvrB subunits scans DNA for abnormalities. Upon binding of the UvrA(2)B(2) complex to a putative damaged site, the DNA wraps around one UvrB monomer. DNA wrap is dependent on ATP binding by UvrB and probably causes local melting of the DNA helix, facilitating insertion of UvrB beta-hairpin between the DNA strands. Then UvrB probes one DNA strand for the presence of a lesion. If a lesion is found the UvrA subunits dissociate and the UvrB-DNA preincision complex is formed. This complex is subsequently bound by UvrC and the second UvrB is released. If no lesion is found, the DNA wraps around the other UvrB subunit that will check the other stand for damage. The polypeptide is UvrABC system protein B (Xanthomonas oryzae pv. oryzae (strain PXO99A)).